Here is a 422-residue protein sequence, read N- to C-terminus: Isocitrate dehydrogenase [NADP] (422 aa).

T94 serves as a coordination point for NADP(+). The D-threo-isocitrate site is built by S103, N105, R109, R119, and R143. Residue D310 participates in Mg(2+) binding. NADP(+) is bound by residues 344 to 350, N357, Y396, and R400; that span reads HGTAPKY.

It belongs to the isocitrate and isopropylmalate dehydrogenases family. Homodimer. Mg(2+) serves as cofactor. Mn(2+) is required as a cofactor.

It catalyses the reaction D-threo-isocitrate + NADP(+) = 2-oxoglutarate + CO2 + NADPH. Its function is as follows. Catalyzes the oxidative decarboxylation of isocitrate to 2-oxoglutarate and carbon dioxide with the concomitant reduction of NADP(+). The sequence is that of Isocitrate dehydrogenase [NADP] (icd) from Staphylococcus aureus (strain MSSA476).